The following is a 151-amino-acid chain: Ribosomal RNA large subunit methyltransferase H (151 aa).

S-adenosyl-L-methionine is bound by residues L70, G99, and 118-123 (LSKLTF).

Belongs to the RNA methyltransferase RlmH family. As to quaternary structure, homodimer.

Its subcellular location is the cytoplasm. The enzyme catalyses pseudouridine(1915) in 23S rRNA + S-adenosyl-L-methionine = N(3)-methylpseudouridine(1915) in 23S rRNA + S-adenosyl-L-homocysteine + H(+). Functionally, specifically methylates the pseudouridine at position 1915 (m3Psi1915) in 23S rRNA. The chain is Ribosomal RNA large subunit methyltransferase H from Gloeobacter violaceus (strain ATCC 29082 / PCC 7421).